The following is a 62-amino-acid chain: Alpha-conotoxin Vt1.27 (62 aa).

An N-terminal signal peptide occupies residues 1–21; the sequence is MGMRMMFTVFLLVVLATTVVS. Positions 22–40 are excised as a propeptide; the sequence is FTLDRASDGASAAADLVAR. Disulfide bonds link Cys46-Cys52 and Cys47-Cys61.

This sequence belongs to the conotoxin A superfamily. In terms of tissue distribution, expressed by the venom duct.

It is found in the secreted. Its function is as follows. The short (45-61) amidated synthetic peptide inhibits the rat neuronal alpha-3-beta-2/CHRNA3-CHRNB2 nicotinic acetylcholine receptor (nAChR) (IC(50)=1.16 uM). It also inhibits Cav2.2/CACNA1C voltage-gated calcium channel (IC(50)=398 nM). In vivo, when tested in rat pain models, this short amidated peptide increases the pain threshold. The chain is Alpha-conotoxin Vt1.27 from Conus planorbis (Planorbis cone).